The primary structure comprises 750 residues: MIIRSPESEVKIMVDRDPIKTSFEEWARPGHFSRTIAKGPNTTTWIWNLHADAHDFDSHTSDLEEISRKVFSAHFGQLSIIFLWLSGMYFHGARFSNYEAWLSDPTHIAPSAQVVWPIVGQEILNGDVGGGFRGIQITSGFFQIWRASGITSELQLYCTAIGALVFAALMLFAGWFHYHKAAPKLAWFQDVESMLNHHLAGLLGLGSLSWAGHQVHVSLPINQFLDAGVDPKEIPLPHEFILNRDLLAQLYPSFAEGSTPFFTLNWSKYAEFLTFRGGLDPVTGGLWLTDIAHHHLAIAIIFLIAGHMYRTNWGIGHGLKEILEAHKGPFTGEGHKGLYEILTTSWHAQLALNLAMLGSLTIVVAHHMYSMPPYPYLAIDYGTQLSLFTHHMWIGGFLIVGAAAHAAIFMVRDYDPTTRYNDLLDRVLRHRDAIISHLNWACIFLGFHSFGLYIHNDTMSALGRPQDMFSDTAIQLQPIFAQWIQNTHALAPGATAPGATTSTSLTWGGGDLVAVGGKVALLPIPLGTADFLVHHIHAFTIHVTVLILLKGVLFARSSRLIPDKANLGFRFPCDGPGRGGTCQVSAWDHVFLGLFWMYNAISVVIFHFSWKMQSDVWGSISNQGVVTHITGGNFAQSSITINGWLRDFLWAQASQVIQSYGSSLSAYGLFFLGAHFVWAFSLMFLFSGRGYWQELIESIVWAHNKLKVAPATQPRALSIVQGRAVGVTHYLLGGIATTWAFFLARIIAVG.

The next 8 helical transmembrane spans lie at 70-93 (VFSA…FHGA), 156-179 (LYCT…FHYH), 195-219 (LNHH…HVSL), 291-309 (IAHH…GHMY), 346-369 (WHAQ…HHMY), 385-411 (LSLF…IFMV), 433-455 (AIIS…LYIH), and 531-549 (FLVH…LILL). Positions 573 and 582 each coordinate [4Fe-4S] cluster. Helical transmembrane passes span 589 to 610 (HVFL…HFSW) and 664 to 686 (LSAY…MFLF). Histidine 675 is a chlorophyll a' binding site. The chlorophyll a site is built by methionine 683 and tyrosine 691. Tryptophan 692 contributes to the phylloquinone binding site. The chain crosses the membrane as a helical span at residues 724–744 (AVGVTHYLLGGIATTWAFFLA).

Belongs to the PsaA/PsaB family. As to quaternary structure, the PsaA/B heterodimer binds the P700 chlorophyll special pair and subsequent electron acceptors. PSI consists of a core antenna complex that captures photons, and an electron transfer chain that converts photonic excitation into a charge separation. The eukaryotic PSI reaction center is composed of at least 11 subunits. The cofactor is P700 is a chlorophyll a/chlorophyll a' dimer, A0 is one or more chlorophyll a, A1 is one or both phylloquinones and FX is a shared 4Fe-4S iron-sulfur center..

Its subcellular location is the plastid. The protein resides in the chloroplast thylakoid membrane. The enzyme catalyses reduced [plastocyanin] + hnu + oxidized [2Fe-2S]-[ferredoxin] = oxidized [plastocyanin] + reduced [2Fe-2S]-[ferredoxin]. PsaA and PsaB bind P700, the primary electron donor of photosystem I (PSI), as well as the electron acceptors A0, A1 and FX. PSI is a plastocyanin-ferredoxin oxidoreductase, converting photonic excitation into a charge separation, which transfers an electron from the donor P700 chlorophyll pair to the spectroscopically characterized acceptors A0, A1, FX, FA and FB in turn. Oxidized P700 is reduced on the lumenal side of the thylakoid membrane by plastocyanin. In Amborella trichopoda, this protein is Photosystem I P700 chlorophyll a apoprotein A1.